The sequence spans 614 residues: Probable pectinesterase/pectinesterase inhibitor 13 (614 aa).

A helical transmembrane segment spans residues 25–45; sequence IIVGTVSLLVVVAAIVGGAFA. Positions 55-102 are disordered; that stretch reads QQQQQQQAKNHNKSGSGNNVVKDSDKKSPSPPTPSQKAPVSAAQSVKP. Residues Asn66, Asn128, Asn197, Asn243, Asn301, Asn351, and Asn367 are each glycosylated (N-linked (GlcNAc...) asparagine). The tract at residues 103-255 is pectinesterase inhibitor 13; sequence GQGDKIIQTL…QVLTSNSLAL (153 aa). Residues 301-598 form a pectinesterase 13 region; sequence NATVAKDGSG…YTVGPFLQGD (298 aa). Substrate-binding residues include Thr376 and Gln406. Asp429 (proton donor; for pectinesterase activity) is an active-site residue. Cys443 and Cys463 are joined by a disulfide. The active-site Nucleophile; for pectinesterase activity is the Asp450. Substrate-binding residues include Arg518 and Trp520. Asn522 and Asn588 each carry an N-linked (GlcNAc...) asparagine glycan.

In the N-terminal section; belongs to the PMEI family. The protein in the C-terminal section; belongs to the pectinesterase family. Expressed in flower buds.

The protein localises to the membrane. The catalysed reaction is [(1-&gt;4)-alpha-D-galacturonosyl methyl ester](n) + n H2O = [(1-&gt;4)-alpha-D-galacturonosyl](n) + n methanol + n H(+). It functions in the pathway glycan metabolism; pectin degradation; 2-dehydro-3-deoxy-D-gluconate from pectin: step 1/5. Its function is as follows. Acts in the modification of cell walls via demethylesterification of cell wall pectin. This Arabidopsis thaliana (Mouse-ear cress) protein is Probable pectinesterase/pectinesterase inhibitor 13 (PME13).